The sequence spans 350 residues: Melatonin receptor type 1A (350 aa).

At 1–29 (MQGNGSALPNASQPVLRGDGARPSWLASA) the chain is on the extracellular side. N-linked (GlcNAc...) asparagine glycans are attached at residues Asn4 and Asn10. The chain crosses the membrane as a helical span at residues 30 to 50 (LACVLIFTIVVDILGNLLVIL). The Cytoplasmic portion of the chain corresponds to 51–63 (SVYRNKKLRNAGN). The chain crosses the membrane as a helical span at residues 64 to 84 (IFVVSLAVADLVVAIYPYPLV). Residues 85–102 (LMSIFNNGWNLGYLHCQV) are Extracellular-facing. The cysteines at positions 100 and 177 are disulfide-linked. A helical membrane pass occupies residues 103-123 (SGFLMGLSVIGSIFNITGIAI). Residues 124 to 142 (NRYCYICHSLKYDKLYSSK) lie on the Cytoplasmic side of the membrane. A helical transmembrane segment spans residues 143 to 163 (NSLCYVLLIWLLTLAAVLPNL). The melatonin site is built by Asn162 and Gln181. At 164 to 187 (RAGTLQYDPRIYSCTFAQSVSSAY) the chain is on the extracellular side. Residues 188 to 208 (TIAVVVFHFLVPMIIVIFCYL) form a helical membrane-spanning segment. Over 209 to 240 (RIWILVLQVRQRVKPDRKPKLKPQDFRNFVTM) the chain is Cytoplasmic. A helical transmembrane segment spans residues 241–261 (FVVFVLFAICWAPLNFIGLAV). Residues 262–274 (ASDPASMVPRIPE) are Extracellular-facing. Residues 275 to 295 (WLFVASYYMAYFNSCLNAIIY) traverse the membrane as a helical segment. Residues 296–350 (GLLNQNFRKEYRRIIVSLCTARVFFVDSSNDVADRVKWKPSPLMTNNNVVKVDSV) lie on the Cytoplasmic side of the membrane.

The protein belongs to the G-protein coupled receptor 1 family. Expressed in hypophyseal pars tuberalis and hypothalamic suprachiasmatic nuclei (SCN). Hippocampus.

The protein resides in the cell membrane. High affinity receptor for melatonin. Likely to mediate the reproductive and circadian actions of melatonin. The activity of this receptor is mediated by pertussis toxin sensitive G proteins that inhibit adenylate cyclase activity. Possibly involved in sleep induction, by melatonin activation of the potassium channel KCNMA1/BK and the dissociation of G-beta and G-gamma subunits, thereby decreasing synaptic transmission. This Homo sapiens (Human) protein is Melatonin receptor type 1A (MTNR1A).